A 668-amino-acid polypeptide reads, in one-letter code: Hemocyanin subunit D (668 aa).

Residues Met-1–Ser-22 form the signal peptide. Residues His-206, His-210, and His-236 each contribute to the Cu cation site. Asn-322 carries an N-linked (GlcNAc...) asparagine glycan. The Cu cation site is built by His-357, His-361, and His-397. Cysteines 567 and 614 form a disulfide.

Belongs to the tyrosinase family. Hemocyanin subfamily. As to quaternary structure, 36-chain polymer consisting of 6 hexamers, each of which includes 4 different chains, A, B, C and D. As to expression, hemolymph.

It is found in the secreted. It localises to the extracellular space. Its function is as follows. Hemocyanins are copper-containing oxygen carriers occurring freely dissolved in the hemolymph of many mollusks and arthropods. This is Hemocyanin subunit D (HCD) from Scutigera coleoptrata (House centipede).